The primary structure comprises 253 residues: Phosphoadenosine 5'-phosphosulfate reductase (253 aa).

Cysteine 239 functions as the Nucleophile; cysteine thiosulfonate intermediate in the catalytic mechanism.

It belongs to the PAPS reductase family. CysH subfamily.

Its subcellular location is the cytoplasm. It catalyses the reaction [thioredoxin]-disulfide + sulfite + adenosine 3',5'-bisphosphate + 2 H(+) = [thioredoxin]-dithiol + 3'-phosphoadenylyl sulfate. It functions in the pathway sulfur metabolism; hydrogen sulfide biosynthesis; sulfite from sulfate: step 3/3. Functionally, catalyzes the formation of sulfite from phosphoadenosine 5'-phosphosulfate (PAPS) using thioredoxin as an electron donor. The sequence is that of Phosphoadenosine 5'-phosphosulfate reductase from Photobacterium profundum (strain SS9).